Here is a 187-residue protein sequence, read N- to C-terminus: Elongation factor P (187 aa).

It belongs to the elongation factor P family.

The protein localises to the cytoplasm. The protein operates within protein biosynthesis; polypeptide chain elongation. Its function is as follows. Involved in peptide bond synthesis. Stimulates efficient translation and peptide-bond synthesis on native or reconstituted 70S ribosomes in vitro. Probably functions indirectly by altering the affinity of the ribosome for aminoacyl-tRNA, thus increasing their reactivity as acceptors for peptidyl transferase. The protein is Elongation factor P of Acidothermus cellulolyticus (strain ATCC 43068 / DSM 8971 / 11B).